The chain runs to 132 residues: Small ribosomal subunit protein uS8 (132 aa).

It belongs to the universal ribosomal protein uS8 family. In terms of assembly, part of the 30S ribosomal subunit. Contacts proteins S5 and S12.

Functionally, one of the primary rRNA binding proteins, it binds directly to 16S rRNA central domain where it helps coordinate assembly of the platform of the 30S subunit. This chain is Small ribosomal subunit protein uS8, found in Methylocella silvestris (strain DSM 15510 / CIP 108128 / LMG 27833 / NCIMB 13906 / BL2).